Reading from the N-terminus, the 296-residue chain is Acetylglutamate kinase (296 aa).

Substrate contacts are provided by residues 69–70, R91, and N193; that span reads GG.

Belongs to the acetylglutamate kinase family. ArgB subfamily.

Its subcellular location is the cytoplasm. It catalyses the reaction N-acetyl-L-glutamate + ATP = N-acetyl-L-glutamyl 5-phosphate + ADP. The protein operates within amino-acid biosynthesis; L-arginine biosynthesis; N(2)-acetyl-L-ornithine from L-glutamate: step 2/4. In terms of biological role, catalyzes the ATP-dependent phosphorylation of N-acetyl-L-glutamate. The polypeptide is Acetylglutamate kinase (Albidiferax ferrireducens (strain ATCC BAA-621 / DSM 15236 / T118) (Rhodoferax ferrireducens)).